Here is a 587-residue protein sequence, read N- to C-terminus: Glutamine--tRNA ligase (587 aa).

A 'HIGH' region motif is present at residues 58-68 (PEPNGYLHIGH). ATP is bound by residues 59 to 61 (EPN) and 65 to 71 (HIGHAKS). Asp91 and Tyr240 together coordinate L-glutamine. Residues Thr259 and 294–295 (RL) each bind ATP. A 'KMSKS' region motif is present at residues 301–305 (VTSKR).

This sequence belongs to the class-I aminoacyl-tRNA synthetase family. As to quaternary structure, monomer.

It localises to the cytoplasm. It catalyses the reaction tRNA(Gln) + L-glutamine + ATP = L-glutaminyl-tRNA(Gln) + AMP + diphosphate. The polypeptide is Glutamine--tRNA ligase (Bordetella pertussis (strain Tohama I / ATCC BAA-589 / NCTC 13251)).